We begin with the raw amino-acid sequence, 385 residues long: Taurine hydroxylase-like protein SAT17 (385 aa).

It functions in the pathway mycotoxin biosynthesis. Its function is as follows. Taurine hydroxylase-like protein; part of the satratoxin SC3 cluster involved in the biosynthesis of satratoxins, trichothecene mycotoxins that are associated with human food poisonings. Satratoxins are suggested to be made by products of multiple gene clusters (SC1, SC2 and SC3) that encode 21 proteins in all, including polyketide synthases, acetyltransferases, and other enzymes expected to modify the trichothecene skeleton. SC1 encodes 10 proteins, SAT1 to SAT10. The largest are SAT8, which encodes a putative polyketide synthase (PKS) with a conventional non-reducing architecture, and SAT10, a putative protein containing four ankyrin repeats and thus may be involved in protein scaffolding. The putative short-chain reductase SAT3 may assist the PKS in some capacity. SAT6 contains a secretory lipase domain and acts probably as a trichothecene esterase. SAT5 encodes a putative acetyltransferase, and so, with SAT6, may affect endogenous protection from toxicity. The probable transcription factor SAT9 may regulate the expression of the SC1 cluster. SC2 encodes proteins SAT11 to SAT16, the largest of which encodes the putative reducing PKS SAT13. SAT11 is a cytochrome P450 monooxygenase, while SAT14 and SAT16 are probable acetyltransferases. The SC2 cluster may be regulated by the transcription factor SAT15. SC3 is a small cluster that encodes 5 proteins, SAT17 to SAT21. SAT21 is a putative MFS-type transporter which may have a role in exporting secondary metabolites. The four other proteins putatively encoded in SC3 include the taurine hydroxylase-like protein SAT17, the O-methyltransferase SAT18, the acetyltransferase SAT19, and the Cys6-type zinc finger SAT20, the latter being probably involved in regulation of SC3 expression. The protein is Taurine hydroxylase-like protein SAT17 of Stachybotrys chartarum (strain CBS 109288 / IBT 7711) (Toxic black mold).